A 105-amino-acid polypeptide reads, in one-letter code: Small ribosomal subunit protein uS14m (105 aa).

This sequence belongs to the universal ribosomal protein uS14 family. As to quaternary structure, component of the mitochondrial small ribosomal subunit (mt-SSU). Mature yeast 74S mitochondrial ribosomes consist of a small (37S) and a large (54S) subunit. The 37S small subunit contains a 15S ribosomal RNA (15S mt-rRNA) and at least 32 different proteins. The 54S large subunit contains a 21S rRNA (21S mt-rRNA) and at least 45 different proteins.

Its subcellular location is the mitochondrion. Functionally, component of the mitochondrial ribosome (mitoribosome), a dedicated translation machinery responsible for the synthesis of mitochondrial genome-encoded proteins, including at least some of the essential transmembrane subunits of the mitochondrial respiratory chain. The mitoribosomes are attached to the mitochondrial inner membrane and translation products are cotranslationally integrated into the membrane. This Schizosaccharomyces pombe (strain 972 / ATCC 24843) (Fission yeast) protein is Small ribosomal subunit protein uS14m (mrp2).